A 576-amino-acid chain; its full sequence is Probable vesicular glutamate transporter eat-4 (576 aa).

The Cytoplasmic portion of the chain corresponds to Met1–Arg69. A disordered region spans residues Ala25–Pro46. Residues Gln36–Pro46 show a composition bias toward polar residues. The helical transmembrane segment at Trp70–Phe90 threads the bilayer. At Gly91–Ser121 the chain is on the extracellular side. Asn100 and Asn114 each carry an N-linked (GlcNAc...) asparagine glycan. A helical transmembrane segment spans residues Val122–Ala142. At Ala143–Leu150 the chain is on the cytoplasmic side. Residues Phe151–Val171 form a helical membrane-spanning segment. Over Lys172–Asp174 the chain is Extracellular. Residues Tyr175–Met195 traverse the membrane as a helical segment. The Cytoplasmic portion of the chain corresponds to His196 to Thr213. Residues Thr214–Val234 form a helical membrane-spanning segment. At Ser235–Trp239 the chain is on the extracellular side. Residues Ala240 to Val260 traverse the membrane as a helical segment. At Thr261 to Lys305 the chain is on the cytoplasmic side. Residues Pro306–Leu325 traverse the membrane as a helical segment. Residues Gln326–Gly344 are Extracellular-facing. Residues Leu345 to Ala365 traverse the membrane as a helical segment. Topologically, residues Asp366–Lys381 are cytoplasmic. A helical membrane pass occupies residues Ile382–Thr402. Residues Ser403–Thr406 lie on the Extracellular side of the membrane. A helical transmembrane segment spans residues Ala407–Val427. The Cytoplasmic segment spans residues Asn428–Ala437. A helical transmembrane segment spans residues Ala438–Val458. Residues Thr459–Thr471 lie on the Extracellular side of the membrane. The helical transmembrane segment at Ser472–Ala492 threads the bilayer. Residues Ser493–Trp576 lie on the Cytoplasmic side of the membrane.

Belongs to the major facilitator superfamily. Sodium/anion cotransporter family. VGLUT subfamily. As to expression, expressed in neurons of the pharynx and the extrapharyngeal nervous system. Highly expressed in male PHC sensory neurons.

It is found in the cell membrane. The protein resides in the synapse. Required for glutamatergic synaptic transmission. In AWB and AWC sensory neurons, required for the detection of preferred food sources, probably via glutamatergic neurotransmission from sensory neurons. Negatively regulates the turning step of male mating behavior. The chain is Probable vesicular glutamate transporter eat-4 from Caenorhabditis elegans.